A 75-amino-acid polypeptide reads, in one-letter code: UPF0352 protein YejL (75 aa).

The protein belongs to the UPF0352 family.

In Salmonella agona (strain SL483), this protein is UPF0352 protein YejL.